A 689-amino-acid chain; its full sequence is DNA ligase (689 aa).

NAD(+) is bound by residues 40 to 44 (DAEYD), 89 to 90 (SL), and E121. K123 acts as the N6-AMP-lysine intermediate in catalysis. The NAD(+) site is built by R144, E179, K295, and K319. C413, C416, C431, and C437 together coordinate Zn(2+). The 80-residue stretch at 610–689 (KEHSSLTGKI…EEWLTIVNNV (80 aa)) folds into the BRCT domain.

Belongs to the NAD-dependent DNA ligase family. LigA subfamily. Mg(2+) serves as cofactor. The cofactor is Mn(2+).

It carries out the reaction NAD(+) + (deoxyribonucleotide)n-3'-hydroxyl + 5'-phospho-(deoxyribonucleotide)m = (deoxyribonucleotide)n+m + AMP + beta-nicotinamide D-nucleotide.. Functionally, DNA ligase that catalyzes the formation of phosphodiester linkages between 5'-phosphoryl and 3'-hydroxyl groups in double-stranded DNA using NAD as a coenzyme and as the energy source for the reaction. It is essential for DNA replication and repair of damaged DNA. This chain is DNA ligase, found in Rickettsia canadensis (strain McKiel).